The primary structure comprises 465 residues: Ras-like GTPase YcjX (465 aa).

The Walker A motif motif lies at 26-33; the sequence is GLSRSGKT. The GTP site is built by serine 28, glycine 31, lysine 32, threonine 33, alanine 34, tryptophan 95, threonine 99, and arginine 100. The GDP site is built by glycine 31, lysine 32, threonine 33, alanine 34, tryptophan 95, and threonine 99. At lysine 249 the chain carries N6-acetyllysine. Positions 338, 340, 341, and 380 each coordinate GTP. Residues lysine 338, aspartate 340, histidine 341, and valine 380 each contribute to the GDP site.

To H.influenzae HI_1637. As to quaternary structure, monomer in solution. It depends on Mg(2+) as a cofactor.

The catalysed reaction is GTP + H2O = GDP + phosphate + H(+). Alternates between an inactive form bound to GDP and an active form bound to GTP. Likely activated by a guanine nucleotide-exchange factor (GEF). Its function is as follows. Binds GTP and GDP. Has intrinsic GTPase activity. Does not hydrolyze ATP. May act as a transducer of stress responses. In Escherichia coli (strain K12), this protein is Ras-like GTPase YcjX (ycjX).